The following is a 340-amino-acid chain: Probable dual-specificity RNA methyltransferase RlmN (340 aa).

Glu93 functions as the Proton acceptor in the catalytic mechanism. The 229-residue stretch at 99 to 327 folds into the Radical SAM core domain; it reads TAKRLTVCVS…VSVRYSRGLE (229 aa). Residues Cys106 and Cys332 are joined by a disulfide bond. [4Fe-4S] cluster contacts are provided by Cys113, Cys117, and Cys120. S-adenosyl-L-methionine-binding positions include 160 to 161, Ser190, 213 to 215, and Asn289; these read GE and SLH. The S-methylcysteine intermediate role is filled by Cys332.

This sequence belongs to the radical SAM superfamily. RlmN family. It depends on [4Fe-4S] cluster as a cofactor.

It localises to the cytoplasm. It catalyses the reaction adenosine(2503) in 23S rRNA + 2 reduced [2Fe-2S]-[ferredoxin] + 2 S-adenosyl-L-methionine = 2-methyladenosine(2503) in 23S rRNA + 5'-deoxyadenosine + L-methionine + 2 oxidized [2Fe-2S]-[ferredoxin] + S-adenosyl-L-homocysteine. The catalysed reaction is adenosine(37) in tRNA + 2 reduced [2Fe-2S]-[ferredoxin] + 2 S-adenosyl-L-methionine = 2-methyladenosine(37) in tRNA + 5'-deoxyadenosine + L-methionine + 2 oxidized [2Fe-2S]-[ferredoxin] + S-adenosyl-L-homocysteine. Functionally, specifically methylates position 2 of adenine 2503 in 23S rRNA and position 2 of adenine 37 in tRNAs. This Rippkaea orientalis (strain PCC 8801 / RF-1) (Cyanothece sp. (strain PCC 8801)) protein is Probable dual-specificity RNA methyltransferase RlmN.